We begin with the raw amino-acid sequence, 259 residues long: Proteasome subunit alpha (259 aa).

This sequence belongs to the peptidase T1A family. In terms of assembly, the 20S proteasome core is composed of 14 alpha and 14 beta subunits that assemble into four stacked heptameric rings, resulting in a barrel-shaped structure. The two inner rings, each composed of seven catalytic beta subunits, are sandwiched by two outer rings, each composed of seven alpha subunits. The catalytic chamber with the active sites is on the inside of the barrel. Has a gated structure, the ends of the cylinder being occluded by the N-termini of the alpha-subunits. Is capped at one or both ends by the proteasome regulatory ATPase, PAN.

It is found in the cytoplasm. Its activity is regulated as follows. The formation of the proteasomal ATPase PAN-20S proteasome complex, via the docking of the C-termini of PAN into the intersubunit pockets in the alpha-rings, triggers opening of the gate for substrate entry. Interconversion between the open-gate and close-gate conformations leads to a dynamic regulation of the 20S proteasome proteolysis activity. Functionally, component of the proteasome core, a large protease complex with broad specificity involved in protein degradation. The protein is Proteasome subunit alpha of Methanococcus maripaludis (strain C5 / ATCC BAA-1333).